The following is a 500-amino-acid chain: MENSQVWLLWGALSVAVLFYLSTLRRRHAGGKPLPPGPTPLPLIGNLHLAGGTSFHHKLRDLARVHGPVMTLKLGLATNVVISSREAAIEAYTKYDRHLAARATPDTFRACGFADRSMVFIPSSDPRWKALRGIQGSHVFTPRGLAAVRPIRERKVGDLMAYLRAHAGEEVLLGQAMHTGLLNLVSFSYFSIDIVDMGSQMARDLREVVDDIISVVGKPNISDFYPFLRPLDLQGLRRWTTKRFNRVFSIMGDIIDRRLAHIRDNKPSHNDFLDSLLELMAAGKIDRVNVLDMLFEAFVAGADTMALTLEWVMAELLKNPGVMAKARAELRDVLGDKEVVEEADAARLPYLQAVLKEAMRLHPVGALLLPHFAVEDGVEVGGYAVPKGSTVLFNAWAIMRDPAAWERPDEFVPERFVERAPLLDFRGKDAEFMPFGSGRRLCPGLPLAERVMPFILASMLHTFEWKLPGGMTAEDVDVSEKFKSANVLAVPLKAVPVLIK.

A helical transmembrane segment spans residues 4–24; that stretch reads SQVWLLWGALSVAVLFYLSTL. Cys-442 provides a ligand contact to heme.

The protein belongs to the cytochrome P450 family. Heme is required as a cofactor.

Its subcellular location is the membrane. It catalyses the reaction ent-cassa-12,15-diene + reduced [NADPH--hemoprotein reductase] + O2 = ent-11beta-hydroxycassa-12,15-diene + oxidized [NADPH--hemoprotein reductase] + H2O + H(+). In terms of biological role, enzyme of the diterpenoid metabolism involved in the biosynthesis of antibacterial oryzalides such as phytocassane. Can use ent-cassadiene as substrate, but not C11-alpha-hydroxy-ent-cassadiene, ent-pimaradiene, ent-sandaracopimaradiene, ent-kaurene, ent-isokaurene, syn-pimaradiene, syn-stemarene, syn-stemodene. This chain is Ent-cassadiene C11-alpha-hydroxylase 1, found in Oryza sativa subsp. japonica (Rice).